A 631-amino-acid chain; its full sequence is Sphingomyelin phosphodiesterase (631 aa).

A disordered region spans residues 1–23 (MPRYGASLRQSCPRSGREQGQDG). Residues 1–46 (MPRYGASLRQSCPRSGREQGQDGTAGAPGLLWMGLVLALALALALA) form the signal peptide. The Saposin B-type domain occupies 87 to 171 (GNLTCPICKG…LLGSTCGHWD (85 aa)). Asn-88 is a glycosylation site (N-linked (GlcNAc...) asparagine). 3 disulfides stabilise this stretch: Cys-91-Cys-167, Cys-94-Cys-159, and Cys-122-Cys-133. Residue Asn-177 is glycosylated (N-linked (GlcNAc...) asparagine). Zn(2+) contacts are provided by Asp-208 and His-210. 2 disulfide bridges follow: Cys-223–Cys-228 and Cys-229–Cys-252. Positions 280 and 320 each coordinate Zn(2+). Asn-337 and Asn-397 each carry an N-linked (GlcNAc...) asparagine glycan. An intrachain disulfide couples Cys-387 to Cys-433. Zn(2+) is bound by residues His-427, His-459, and His-461. Asn-505 carries N-linked (GlcNAc...) asparagine glycosylation. Residue Ser-510 is modified to Phosphoserine; by PKC/PRKCD. Asn-522 carries N-linked (GlcNAc...) asparagine glycosylation. Disulfide bonds link Cys-586-Cys-590 and Cys-596-Cys-609.

This sequence belongs to the acid sphingomyelinase family. In terms of assembly, monomer. Interacts with SORT1; the interaction is required for SMPD1 targeting to lysosomes. Zn(2+) is required as a cofactor. Proteolytically processed. Mature lysosomal form arises from C-terminal proteolytic processing of pro-sphingomyelin phosphodiesterase. Post-translationally, this form is generated following cleavage by CASP7 in the extracellular milieu. It shows increased activity. In terms of processing, both lysosomal and secreted forms are glycosylated but they show a differential pattern of glycosylation. Phosphorylated at Ser-510 by PRKCD upon stress stimuli. Phosphorylation is required for secretion.

The protein resides in the lysosome. The protein localises to the lipid droplet. Its subcellular location is the secreted. It localises to the extracellular space. The enzyme catalyses a sphingomyelin + H2O = phosphocholine + an N-acylsphing-4-enine + H(+). The catalysed reaction is N-(octadecanoyl)-sphing-4-enine-1-phosphocholine + H2O = N-octadecanoylsphing-4-enine + phosphocholine + H(+). It carries out the reaction 1,2-dihexadecanoyl-sn-glycero-3-phosphocholine + H2O = 1,2-dihexadecanoyl-sn-glycerol + phosphocholine + H(+). It catalyses the reaction a 1,2-diacyl-sn-glycero-3-phosphocholine + H2O = phosphocholine + a 1,2-diacyl-sn-glycerol + H(+). With respect to regulation, hydrolysis of liposomal sphingomyelin is stimulated by incorporation of diacylglycerol (DAG), ceramide and free fatty acids into the liposomal membranes. Phosphatidylcholine hydrolysis is inhibited by incorporation of cholesterol, ceramide, DAG, monoacylglycerol and fatty acids. Antidepressants, namely amitriptyline, imipramine, desipramine, fluoxetine, sertraline, escitalopram, and maprotiline inhibit sphingomyelin phosphodiesterase activity. Its activity is regulated as follows. (Microbial infection) The secretory form is activated by P.aeruginosa, this activation results in the release of ceramide in the outer leaflet of the plasma membrane. (Microbial infection) The secretory form is activated by human coronavirus SARS-CoV-2, this activation results in the release of ceramide in the outer leaflet of the plasma membrane. Functionally, converts sphingomyelin to ceramide. Exists as two enzymatic forms that arise from alternative trafficking of a single protein precursor, one that is targeted to the endolysosomal compartment, whereas the other is released extracellularly. However, in response to various forms of stress, lysosomal exocytosis may represent a major source of the secretory form. Its function is as follows. In the lysosomes, converts sphingomyelin to ceramide. Plays an important role in the export of cholesterol from the intraendolysosomal membranes. Also has phospholipase C activities toward 1,2-diacylglycerolphosphocholine and 1,2-diacylglycerolphosphoglycerol. Modulates stress-induced apoptosis through the production of ceramide. In terms of biological role, when secreted, modulates cell signaling with its ability to reorganize the plasma membrane by converting sphingomyelin to ceramide. Secreted form is increased in response to stress and inflammatory mediators such as IL1B, IFNG or TNF as well as upon infection with bacteria and viruses. Produces the release of ceramide in the outer leaflet of the plasma membrane playing a central role in host defense. Ceramide reorganizes these rafts into larger signaling platforms that are required to internalize P.aeruginosa, induce apoptosis and regulate the cytokine response in infected cells. In wounded cells, the lysosomal form is released extracellularly in the presence of Ca(2+) and promotes endocytosis and plasma membrane repair. This form is generated following cleavage by CASP7 in the extracellular milieu in response to bacterial infection. It shows increased ability to convert sphingomyelin to ceramide and promotes plasma membrane repair. Plasma membrane repair by ceramide counteracts the action of gasdermin-D (GSDMD) perforin (PRF1) pores that are formed in response to bacterial infection. Functionally, (Microbial infection) Secretion is activated by bacteria such as P.aeruginosa, N.gonorrhoeae and others, this activation results in the release of ceramide in the outer leaflet of the plasma membrane which facilitates the infection. Its function is as follows. (Microbial infection) Secretion is activated by human coronaviruses SARS-CoV and SARS-CoV-2 as well as Zaire ebolavirus, this activation results in the release of ceramide in the outer leaflet of the plasma membrane which facilitates the infection. In terms of biological role, lacks residues that bind the cofactor Zn(2+) and has no enzyme activity. This is Sphingomyelin phosphodiesterase from Homo sapiens (Human).